The chain runs to 314 residues: PDZ domain-containing protein GIPC2 (314 aa).

The segment covering 1-12 (MPLGLRGKKKAA) has biased composition (basic residues). The segment at 1 to 36 (MPLGLRGKKKAAKSKETARLVEGERSGGSQGVPGPP) is disordered. The span at 13-25 (KSKETARLVEGER) shows a compositional bias: basic and acidic residues. The region spanning 117-197 (EVNVYKSEDS…EELFTLQLIE (81 aa)) is the PDZ domain.

Belongs to the GIPC family. In terms of assembly, probably interacts with SEMA5A.

The protein resides in the cytoplasm. In Rattus norvegicus (Rat), this protein is PDZ domain-containing protein GIPC2 (Gipc2).